The primary structure comprises 471 residues: Cysteine--tRNA ligase (471 aa).

Cys30 lines the Zn(2+) pocket. Positions 32 to 42 (PTVYNFAHIGN) match the 'HIGH' region motif. The Zn(2+) site is built by Cys212, His237, and Glu241. Residues 270–274 (KMSKS) carry the 'KMSKS' region motif. Position 273 (Lys273) interacts with ATP.

This sequence belongs to the class-I aminoacyl-tRNA synthetase family. In terms of assembly, monomer. Zn(2+) serves as cofactor.

It is found in the cytoplasm. The catalysed reaction is tRNA(Cys) + L-cysteine + ATP = L-cysteinyl-tRNA(Cys) + AMP + diphosphate. This chain is Cysteine--tRNA ligase, found in Leptospira interrogans serogroup Icterohaemorrhagiae serovar Lai (strain 56601).